We begin with the raw amino-acid sequence, 323 residues long: Dehydrogenase/reductase SDR family member 7B (323 aa).

Residues methionine 1–aspartate 17 are Cytoplasmic-facing. Residues leucine 18 to phenylalanine 38 traverse the membrane as a helical; Signal-anchor for type II membrane protein segment. Topologically, residues arginine 39 to serine 323 are lumenal. Serine 62 and leucine 64 together coordinate NAD(+). Serine 192 serves as a coordination point for substrate. 3 residues coordinate NAD(+): tyrosine 205, lysine 209, and threonine 240. Tyrosine 205 acts as the Proton acceptor in catalysis.

The protein belongs to the short-chain dehydrogenases/reductases (SDR) family.

Its subcellular location is the endoplasmic reticulum membrane. Functionally, putative oxidoreductase. This is Dehydrogenase/reductase SDR family member 7B from Mus musculus (Mouse).